The following is a 156-amino-acid chain: 6,7-dimethyl-8-ribityllumazine synthase (156 aa).

5-amino-6-(D-ribitylamino)uracil contacts are provided by residues Phe22, 56–58 (AFE), and 80–82 (AVV). Position 85–86 (85–86 (ET)) interacts with (2S)-2-hydroxy-3-oxobutyl phosphate. The active-site Proton donor is His88. Phe113 contributes to the 5-amino-6-(D-ribitylamino)uracil binding site. Arg127 provides a ligand contact to (2S)-2-hydroxy-3-oxobutyl phosphate.

Belongs to the DMRL synthase family.

It catalyses the reaction (2S)-2-hydroxy-3-oxobutyl phosphate + 5-amino-6-(D-ribitylamino)uracil = 6,7-dimethyl-8-(1-D-ribityl)lumazine + phosphate + 2 H2O + H(+). It functions in the pathway cofactor biosynthesis; riboflavin biosynthesis; riboflavin from 2-hydroxy-3-oxobutyl phosphate and 5-amino-6-(D-ribitylamino)uracil: step 1/2. Its function is as follows. Catalyzes the formation of 6,7-dimethyl-8-ribityllumazine by condensation of 5-amino-6-(D-ribitylamino)uracil with 3,4-dihydroxy-2-butanone 4-phosphate. This is the penultimate step in the biosynthesis of riboflavin. The protein is 6,7-dimethyl-8-ribityllumazine synthase of Pediococcus pentosaceus (strain ATCC 25745 / CCUG 21536 / LMG 10740 / 183-1w).